A 211-amino-acid polypeptide reads, in one-letter code: Ras-related protein rab-11.1 (211 aa).

Gly18–Asn26 contacts GTP. An Effector region motif is present at residues Ser40–Phe48. GTP contacts are provided by residues Asp66–Gln70, Asn124–Asp127, and Ser154–Leu156. Residues Gly187–Pro211 are disordered. Residues Cys208 and Cys209 are each lipidated (S-geranylgeranyl cysteine).

The protein belongs to the small GTPase superfamily. Rab family. Interacts with rei-1 and rei-2. The GDP-form preferentially binds to rei-1 and rei-2. In terms of tissue distribution, expressed weakly in sperm, but more predominantly in oocytes. Expressed in the intestine.

Its subcellular location is the cytoplasmic vesicle. The protein resides in the secretory vesicle. The protein localises to the endosome. It is found in the cytoplasm. It localises to the cytoskeleton. Its subcellular location is the spindle. The protein resides in the microtubule organizing center. The protein localises to the spindle pole body. It is found in the centrosome. It localises to the apical cell membrane. Its subcellular location is the cytosol. The protein resides in the recycling endosome membrane. The protein localises to the golgi apparatus membrane. It is found in the cytoplasmic granule. Its function is as follows. The small GTPases Rab are key regulators of intracellular membrane trafficking, from the formation of transport vesicles to their fusion with membranes. Rabs cycle between an inactive GDP-bound form and an active GTP-bound form that is able to recruit to membranes different set of downstream effectors directly responsible for vesicle formation, movement, tethering and fusion. Involved in regulating the meiotic maturation of oocytes. Plays a role in egg shell formation, regulating exocytosis of chondroitin proteoglycans following fertilization. Controls cortical granule localization and targets them to the plasma membrane for exocytosis. Acts as a major regulator of membrane delivery during cytokinesis. Regulates the cytoskeleton by facilitating astral microtubule elongation and organization during metaphase to ensure proper spindle alignment and polarity in the first embryonic cell division. Maintains normal endoplasmic reticulum morphology during metaphase. Involved in vesicle formation and plasma membrane repair following exposure to pore forming toxins. Regulates endocytic recycling. May play a role in yolk receptor endocytosis in growing oocytes. Plays a role in the shedding of pathogen spores from intestinal cells via its involvement in spore fusion and endocytic trafficking. The sequence is that of Ras-related protein rab-11.1 from Caenorhabditis elegans.